The primary structure comprises 318 residues: Small ribosomal subunit protein uS3 (318 aa).

The KH type-2 domain maps to 17–86 (MDEYFAEQLS…NPQIDAQEVK (70 aa)). Positions 198–229 (SVEVEEPAEKPAEKPAEKPAEKAAAPKKEAAK) are enriched in basic and acidic residues. The disordered stretch occupies residues 198 to 275 (SVEVEEPAEK…VQAETSEEIE (78 aa)). Residues 234-250 (APAPEAPAPAPEAPAPA) are compositionally biased toward pro residues. Acidic residues predominate over residues 253–275 (EEAEVAEPEEAEEVQAETSEEIE).

It belongs to the universal ribosomal protein uS3 family. As to quaternary structure, part of the 30S ribosomal subunit.

Binds the lower part of the 30S subunit head. This is Small ribosomal subunit protein uS3 from Methanosarcina acetivorans (strain ATCC 35395 / DSM 2834 / JCM 12185 / C2A).